Here is a 300-residue protein sequence, read N- to C-terminus: GTPase Era (300 aa).

The Era-type G domain occupies lysine 4 to lysine 173. Residues glycine 12–serine 19 form a G1 region. A GTP-binding site is contributed by glycine 12–serine 19. A G2 region spans residues glutamine 38–asparagine 42. Positions aspartate 59–glycine 62 are G3. GTP contacts are provided by residues aspartate 59–phenylalanine 63 and serine 122–glutamate 125. Residues serine 122–glutamate 125 form a G4 region. Positions isoleucine 152–alanine 154 are G5. The region spanning leucine 204–asparagine 282 is the KH type-2 domain.

The protein belongs to the TRAFAC class TrmE-Era-EngA-EngB-Septin-like GTPase superfamily. Era GTPase family. Monomer.

It is found in the cytoplasm. The protein resides in the cell membrane. Its function is as follows. An essential GTPase that binds both GDP and GTP, with rapid nucleotide exchange. Plays a role in 16S rRNA processing and 30S ribosomal subunit biogenesis and possibly also in cell cycle regulation and energy metabolism. The sequence is that of GTPase Era from Ureaplasma urealyticum serovar 10 (strain ATCC 33699 / Western).